The sequence spans 112 residues: DIVITQDELSNPVTSGESVSISCRSSKSLLYKDGKTYLNWFLQRPGQSPQLLISLMSTRASGVSDRFSGSGSRTDFTLEISRVKAEDVGVYYCQQLVEYPLTFGAGTKLELK.

The segment at 1–23 (DIVITQDELSNPVTSGESVSISC) is framework-1. A disulfide bond links cysteine 23 and cysteine 93. Positions 24–39 (RSSKSLLYKDGKTYLN) are complementarity-determining-1. The framework-2 stretch occupies residues 40–54 (WFLQRPGQSPQLLIS). Residues 55-61 (LMSTRAS) are complementarity-determining-2. Positions 62 to 93 (GVSDRFSGSGSRTDFTLEISRVKAEDVGVYYC) are framework-3. Residues 94-102 (QQLVEYPLT) are complementarity-determining-3. The segment at 103–112 (FGAGTKLELK) is framework-4.

The sequence is that of Ig kappa chain V-II region MOPC 167 from Mus musculus (Mouse).